A 206-amino-acid chain; its full sequence is Probable glutathione S-transferase 6 (206 aa).

Positions 2 to 79 (VHYKLVYFPL…YLAREFGIAG (78 aa)) constitute a GST N-terminal domain. Residues tyrosine 8, tryptophan 39, lysine 43, 49–51 (GQL), and 63–64 (QS) contribute to the glutathione site. One can recognise a GST C-terminal domain in the interval 81–206 (NDTEAAEVDA…YIANRPDYPF (126 aa)).

The protein belongs to the GST superfamily. Sigma family.

It catalyses the reaction RX + glutathione = an S-substituted glutathione + a halide anion + H(+). Conjugation of reduced glutathione to a wide number of exogenous and endogenous hydrophobic electrophiles. The sequence is that of Probable glutathione S-transferase 6 (gst-6) from Caenorhabditis elegans.